Here is a 217-residue protein sequence, read N- to C-terminus: Probable transaldolase (217 aa).

The active-site Schiff-base intermediate with substrate is Lys83.

This sequence belongs to the transaldolase family. Type 3B subfamily.

The protein resides in the cytoplasm. The catalysed reaction is D-sedoheptulose 7-phosphate + D-glyceraldehyde 3-phosphate = D-erythrose 4-phosphate + beta-D-fructose 6-phosphate. It functions in the pathway carbohydrate degradation; pentose phosphate pathway; D-glyceraldehyde 3-phosphate and beta-D-fructose 6-phosphate from D-ribose 5-phosphate and D-xylulose 5-phosphate (non-oxidative stage): step 2/3. Its function is as follows. Transaldolase is important for the balance of metabolites in the pentose-phosphate pathway. In Hydrogenobaculum sp. (strain Y04AAS1), this protein is Probable transaldolase.